A 337-amino-acid polypeptide reads, in one-letter code: Anthranilate phosphoribosyltransferase (337 aa).

5-phospho-alpha-D-ribose 1-diphosphate is bound by residues Gly-82, 85–86, Thr-90, 92–95, 110–118, and Ser-122; these read GD, NIST, and KHGGRSVSS. Residue Gly-82 coordinates anthranilate. Ser-94 is a Mg(2+) binding site. An anthranilate-binding site is contributed by Arg-168. 2 residues coordinate Mg(2+): Asp-226 and Glu-227.

It belongs to the anthranilate phosphoribosyltransferase family. Homodimer. The cofactor is Mg(2+).

It catalyses the reaction N-(5-phospho-beta-D-ribosyl)anthranilate + diphosphate = 5-phospho-alpha-D-ribose 1-diphosphate + anthranilate. Its pathway is amino-acid biosynthesis; L-tryptophan biosynthesis; L-tryptophan from chorismate: step 2/5. Its function is as follows. Catalyzes the transfer of the phosphoribosyl group of 5-phosphorylribose-1-pyrophosphate (PRPP) to anthranilate to yield N-(5'-phosphoribosyl)-anthranilate (PRA). This is Anthranilate phosphoribosyltransferase from Francisella tularensis subsp. mediasiatica (strain FSC147).